The chain runs to 452 residues: Trigger factor (452 aa).

Positions 162-247 constitute a PPIase FKBP-type domain; sequence GDTVTIDYKG…IHEVKSKQLP (86 aa). The disordered stretch occupies residues 427-452; sequence AKAKLEAKEAEEAEDKEEAEDKKENK.

This sequence belongs to the FKBP-type PPIase family. Tig subfamily.

Its subcellular location is the cytoplasm. The catalysed reaction is [protein]-peptidylproline (omega=180) = [protein]-peptidylproline (omega=0). In terms of biological role, involved in protein export. Acts as a chaperone by maintaining the newly synthesized protein in an open conformation. Functions as a peptidyl-prolyl cis-trans isomerase. This is Trigger factor from Lactobacillus helveticus (strain DPC 4571).